Here is a 643-residue protein sequence, read N- to C-terminus: Extracellular metalloproteinase 4 (643 aa).

A signal peptide spans 1 to 18 (MHGLLLAGLLALPLNVLA). Positions 19 to 254 (HPTESHSSGI…VHSVVDYVSA (236 aa)) are excised as a propeptide. Residues 47–57 (TKSDAVPKQDD) show a composition bias toward basic and acidic residues. Positions 47–71 (TKSDAVPKQDDESFTTSSTGDDNVS) are disordered. A compositionally biased stretch (polar residues) spans 60 to 71 (FTTSSTGDDNVS). Asn-271 and Asn-420 each carry an N-linked (GlcNAc...) asparagine glycan. His-437 provides a ligand contact to Zn(2+). Glu-438 is an active-site residue. His-441 is a Zn(2+) binding site. Asn-510 and Asn-553 each carry an N-linked (GlcNAc...) asparagine glycan.

It belongs to the peptidase M36 family. The cofactor is Zn(2+).

It is found in the secreted. Secreted metalloproteinase probably acting as a virulence factor. This chain is Extracellular metalloproteinase 4 (MEP4), found in Arthroderma benhamiae (Trichophyton mentagrophytes).